Consider the following 397-residue polypeptide: Homoserine O-acetyltransferase (397 aa).

The AB hydrolase-1 domain maps to 58 to 368 (NAVLVLHALT…EAKWGHDAFL (311 aa)). The Nucleophile role is filled by Ser-164. Arg-233 provides a ligand contact to substrate. Active-site residues include Asp-331 and His-364. Asp-365 lines the substrate pocket.

This sequence belongs to the AB hydrolase superfamily. MetX family. In terms of assembly, homodimer.

It is found in the cytoplasm. The enzyme catalyses L-homoserine + acetyl-CoA = O-acetyl-L-homoserine + CoA. It functions in the pathway amino-acid biosynthesis; L-methionine biosynthesis via de novo pathway; O-acetyl-L-homoserine from L-homoserine: step 1/1. Transfers an acetyl group from acetyl-CoA to L-homoserine, forming acetyl-L-homoserine. The chain is Homoserine O-acetyltransferase from Solidesulfovibrio magneticus (strain ATCC 700980 / DSM 13731 / RS-1) (Desulfovibrio magneticus).